We begin with the raw amino-acid sequence, 118 residues long: Small ribosomal subunit protein uS13 (118 aa).

The segment at 91–118 (HRRSLPLRGQRTKNNARTRKGPKKPIKR) is disordered.

It belongs to the universal ribosomal protein uS13 family. In terms of assembly, part of the 30S ribosomal subunit. Forms a loose heterodimer with protein S19. Forms two bridges to the 50S subunit in the 70S ribosome.

Functionally, located at the top of the head of the 30S subunit, it contacts several helices of the 16S rRNA. In the 70S ribosome it contacts the 23S rRNA (bridge B1a) and protein L5 of the 50S subunit (bridge B1b), connecting the 2 subunits; these bridges are implicated in subunit movement. Contacts the tRNAs in the A and P-sites. This Hydrogenovibrio crunogenus (strain DSM 25203 / XCL-2) (Thiomicrospira crunogena) protein is Small ribosomal subunit protein uS13.